Consider the following 141-residue polypeptide: Large ribosomal subunit protein uL11 (141 aa).

The protein belongs to the universal ribosomal protein uL11 family. In terms of assembly, part of the ribosomal stalk of the 50S ribosomal subunit. Interacts with L10 and the large rRNA to form the base of the stalk. L10 forms an elongated spine to which L12 dimers bind in a sequential fashion forming a multimeric L10(L12)X complex. Post-translationally, one or more lysine residues are methylated.

Functionally, forms part of the ribosomal stalk which helps the ribosome interact with GTP-bound translation factors. This chain is Large ribosomal subunit protein uL11, found in Roseiflexus sp. (strain RS-1).